The chain runs to 861 residues: Importin subunit beta-1 (861 aa).

The residue at position 2 (Ser-2) is an N-acetylserine. HEAT repeat units follow at residues 3-35 (TAEFAQLLENSILSPDQNIRLTSETQLKKLSND), 37-66 (FLQFAGLSSQVLIDENTKLEGRILAALTLK), 90-129 (PEAKNQIKTNALTALVSIEPRIANAAAQLIAAIADIELPH), 134-164 (ELMKIMVDNTGAEQPENVKRASLLALGYMCE), 177-208 (SNNILIAIVQGAQSTETSKAVRLAALNALADS), 219-255 (EGERNYLMQVVCEATQAEDIEVQAAAFGCLCKIMSLY), 260-306 (KPYM…ELAQ), 317-362 (FALS…AQNC), 367-395 (LEPVLEFVEQNITADNWRNREAAVMAFGS), 402-442 (KVQR…ADSV), 452-484 (LPGVVQACLIGLQDHPKVATNCSWTIINLVEQL), 496-530 (YPALVDGLIGAANRIDNEFNARASAFSALTTMVEY), 536-586 (AETS…VIRK), 592-629 (EPVADMLMGLFFRLLEKKDSAFIEDDVFYAISALAASL), 634-669 (EKYLETFSPYLLKALNQVDSPVSITAVGFIADISNS), 675-713 (RRYSDAMMNVLAQMISNPNARRELKPAVLSVFGDIASNI), 718-764 (IPYL…IVAG), 773-812 (FPYVGTIFQFIAQVAEDPQLYSEDATSRAAVGLIGDIAAM), and 819-859 (KQFY…KRQL). The region spanning 25–106 (SETQLKKLSN…KTNALTALVS (82 aa)) is the Importin N-terminal domain. A Phosphoserine modification is found at Ser-836.

The protein belongs to the importin beta family. Importin beta-1 subfamily. Forms a complex with the importin alpha subunit (SRP1/KAP60). Interacts with Ran (GSP1); interacts specifically with the GTP-bound form of Ran (GTP-Ran), protecting it from GTP hydrolysis and nucleotide exchange. Interacts with nucleoporin NUP1.

It is found in the cytoplasm. It localises to the nucleus. Its subcellular location is the nuclear pore complex. In terms of biological role, importin beta subunit that functions in nuclear protein import through association with the importin alpha subunit, which binds to the classical nuclear localization signal (cNLS) in cargo substrates. Docking of the importin/substrate complex to the nuclear pore complex (NPC) is mediated by importin beta through binding to nucleoporin FxFG repeats and the complex is subsequently translocated through the pore by an energy requiring, Ran-dependent mechanism. At the nucleoplasmic side of the NPC, GTP-Ran binds to importin beta and the three components separate, leading to release of the cargo. Importin alpha and beta are re-exported from the nucleus to the cytoplasm where GTP hydrolysis releases Ran from importin beta. The directionality of nuclear import is thought to be conferred by an asymmetric distribution of the GTP- and GDP-bound forms of Ran between the cytoplasm and nucleus. Mediates the nuclear import of histones H2A and H2B. Mediates the nuclear import of transcription factor GCN4. This chain is Importin subunit beta-1, found in Saccharomyces cerevisiae (strain ATCC 204508 / S288c) (Baker's yeast).